An 864-amino-acid polypeptide reads, in one-letter code: Leucine--tRNA ligase (864 aa).

Residues 47-57 carry the 'HIGH' region motif; it reads PYPSGNLHMGH. The tract at residues 298–317 is disordered; sequence SEQDRVADDRPKRGVATGGT. The segment covering 299–309 has biased composition (basic and acidic residues); the sequence is EQDRVADDRPK. Positions 622-626 match the 'KMSKS' region motif; that stretch reads KMSKS. Lys625 is an ATP binding site.

This sequence belongs to the class-I aminoacyl-tRNA synthetase family.

Its subcellular location is the cytoplasm. It catalyses the reaction tRNA(Leu) + L-leucine + ATP = L-leucyl-tRNA(Leu) + AMP + diphosphate. The chain is Leucine--tRNA ligase from Synechococcus sp. (strain RCC307).